The sequence spans 108 residues: MLASACLLTCLGQIAQKYAVQGWRGAFPGVFAALRSLWLALACLGSGLLIWLLVLQRLDVGIAYPMLGVNFVLITLAGRYVFNEPVDVRHWLGIALILVGVFQLGRQA.

3 helical membrane passes run 36–56, 58–78, and 85–105; these read SLWL…LVLQ, LDVG…TLAG, and PVDV…FQLG.

This sequence belongs to the ArnE family. As to quaternary structure, heterodimer of ArnE and ArnF.

It localises to the cell inner membrane. It functions in the pathway bacterial outer membrane biogenesis; lipopolysaccharide biosynthesis. Its function is as follows. Translocates 4-amino-4-deoxy-L-arabinose-phosphoundecaprenol (alpha-L-Ara4N-phosphoundecaprenol) from the cytoplasmic to the periplasmic side of the inner membrane. The chain is Probable 4-amino-4-deoxy-L-arabinose-phosphoundecaprenol flippase subunit ArnE from Pseudomonas syringae pv. syringae (strain B728a).